The sequence spans 56 residues: Cruciferin (56 aa).

Thr-45 is modified (phosphothreonine).

This sequence belongs to the 11S seed storage protein (globulins) family. Hexamer; each subunit is composed of an acidic and a basic chain derived from a single precursor and linked by a disulfide bond.

Functionally, this is a seed storage protein. The polypeptide is Cruciferin (Sinapis alba (White mustard)).